The chain runs to 388 residues: Galactokinase (388 aa).

Residue 32-35 (EHTD) coordinates substrate. ATP is bound by residues Ser-66 and 123 to 129 (GASLSSS). Ser-129 and Glu-161 together coordinate Mg(2+). Asp-173 acts as the Proton acceptor in catalysis. Position 223 (Tyr-223) interacts with substrate.

Belongs to the GHMP kinase family. GalK subfamily.

The protein resides in the cytoplasm. It catalyses the reaction alpha-D-galactose + ATP = alpha-D-galactose 1-phosphate + ADP + H(+). The protein operates within carbohydrate metabolism; galactose metabolism. Functionally, catalyzes the transfer of the gamma-phosphate of ATP to D-galactose to form alpha-D-galactose-1-phosphate (Gal-1-P). The protein is Galactokinase of Staphylococcus carnosus (strain TM300).